The sequence spans 621 residues: Zinc metalloproteinase-disintegrin-like NaMP (621 aa).

Positions 1–20 are cleaved as a signal peptide; the sequence is MIQPLLVAICLVVFPYQGSS. Positions 21–188 are excised as a propeptide; sequence TILESGKVRD…GESDETIKKI (168 aa). A Peptidase M12B domain is found at 206–402; sequence KHIELYMVAD…KSAQCILNDP (197 aa). Asn-225, Asn-268, and Asn-319 each carry an N-linked (GlcNAc...) asparagine glycan. 17 disulfide bridges follow: Cys-317/Cys-397, Cys-357/Cys-381, Cys-359/Cys-364, Cys-413/Cys-442, Cys-424/Cys-437, Cys-426/Cys-432, Cys-436/Cys-459, Cys-450/Cys-456, Cys-455/Cys-481, Cys-468/Cys-488, Cys-475/Cys-507, Cys-500/Cys-512, Cys-519/Cys-569, Cys-534/Cys-579, Cys-547/Cys-557, Cys-564/Cys-605, and Cys-599/Cys-610. A Zn(2+)-binding site is contributed by His-342. The active site involves Glu-343. Zn(2+) contacts are provided by His-346 and His-352. The Disintegrin domain occupies 410 to 496; the sequence is TAICGNGFVE…ECPMNHFHMN (87 aa). The D/ECD-tripeptide signature appears at 474 to 476; sequence DCD. Asn-551 carries an N-linked (GlcNAc...) asparagine glycan.

The protein belongs to the venom metalloproteinase (M12B) family. P-III subfamily. P-IIIa sub-subfamily. In terms of assembly, monomer. Requires Zn(2+) as cofactor. As to expression, expressed by the venom gland.

Its subcellular location is the secreted. Its function is as follows. Snake venom zinc metalloproteinase that inhibits platelet aggregation and degrades fibrinogen. In Naja atra (Chinese cobra), this protein is Zinc metalloproteinase-disintegrin-like NaMP.